The sequence spans 439 residues: Protein ABHD8 (439 aa).

Disordered regions lie at residues 54–75 and 122–148; these read HAGP…PGVK and ELAE…RPKR. Over residues 58-67 the composition is skewed to pro residues; it reads APIPTPPPPP. Residues 138-148 are compositionally biased toward basic residues; sequence GRRRRPRRPKR. In terms of domain architecture, AB hydrolase-1 spans 169-271; that stretch reads VLFFIHGVGG…HKVIMINGGG (103 aa). Active-site charge relay system residues include Ser244, Asp362, and His390. The segment at 415–439 is disordered; that stretch reads EAEPKLEPKPKPQLLQPEPAPGEEK.

It belongs to the AB hydrolase superfamily. In terms of assembly, interacts with NLRP3 (via NACHT and LLR domains); this interaction is enhanced in the presence of NLRP3 inflammasome inducers, such as ATP, nigericin, silica, or alum. Interacts with ZDHHC12.

Its subcellular location is the cytoplasm. Functionally, negatively regulates NLRP3-driven inflammation. Promotes NLRP3 degradation through the chaperone-mediated autophagy (CMA) pathway, hence attenuating inflammasome activation and IL1B secretion. Acts by recruiting palmitoyltransferase ZDHHC12 to NLRP3, facilitating NLRP3 palmitoylation and subsequent degradation. The protein is Protein ABHD8 of Mus musculus (Mouse).